Here is a 421-residue protein sequence, read N- to C-terminus: MKKHSARVAPLSACNSPVLTLTKVEGEERPRDSPGPAEAQAPAGVEAGGRASRRCWTCSRAQLKKIFWGVAVVLCVCSSWAGSTQLAKLTFRKFDAPFTLTWFATNWNFLFFPLYYVGHVCKSTEKQSVKQRYRECCRFFGDNGLTLKVFFTKAAPFGVLWTLTNYLYLHAIKKINTTDVSVLFCCNKAFVFLLSWIVLRDRFMGVRIVAAILAIAGIVMMTYADGFHSHSVIGIALVVASASMSALYKVLFKLLLGSAKFGEAALFLSILGVFNILFITCIPIILYFTKVEYWSSFDDIPWGNLCGFSVLLLTFNIVLNFGIAVTYPTLMSLGIVLSIPVNAVIDHYTSQIVFNGVRVIAIIIIGLGFLLLLLPEEWDVWLIKLLTRLKVRKKEEPAEGAADLSSGPQSKNRRARPSFAR.

The segment at Glu25–Val45 is disordered. The next 10 membrane-spanning stretches (helical) occupy residues Ile66 to Leu86, Phe98 to Gly118, Val149 to Leu169, Asp179 to Leu199, Ile208 to His228, Val232 to Phe252, Leu266 to Leu286, Leu305 to Val325, Thr326 to Asp346, and Ile352 to Leu372. Residues Lys393–Arg421 form a disordered region. Over residues Lys411 to Arg421 the composition is skewed to basic residues.

Belongs to the SLC35F solute transporter family. Expressed at the highest levels in the adult cerebellum.

The protein resides in the membrane. It catalyses the reaction thiamine(in) = thiamine(out). Its function is as follows. Mediates thiamine transport. The chain is Solute carrier family 35 member F3 from Homo sapiens (Human).